Consider the following 341-residue polypeptide: Glycerol-3-phosphate dehydrogenase [NAD(P)+] (341 aa).

Residues Ser14, Phe15, Arg35, and Lys108 each coordinate NADPH. Sn-glycerol 3-phosphate contacts are provided by Lys108 and Gly136. Ala140 serves as a coordination point for NADPH. Sn-glycerol 3-phosphate is bound by residues Lys191, Asp244, Ser254, Arg255, and Asn256. The active-site Proton acceptor is Lys191. Arg255 lines the NADPH pocket. Positions 279 and 281 each coordinate NADPH.

Belongs to the NAD-dependent glycerol-3-phosphate dehydrogenase family.

It is found in the cytoplasm. It catalyses the reaction sn-glycerol 3-phosphate + NAD(+) = dihydroxyacetone phosphate + NADH + H(+). The enzyme catalyses sn-glycerol 3-phosphate + NADP(+) = dihydroxyacetone phosphate + NADPH + H(+). The protein operates within membrane lipid metabolism; glycerophospholipid metabolism. In terms of biological role, catalyzes the reduction of the glycolytic intermediate dihydroxyacetone phosphate (DHAP) to sn-glycerol 3-phosphate (G3P), the key precursor for phospholipid synthesis. The protein is Glycerol-3-phosphate dehydrogenase [NAD(P)+] of Pseudomonas fluorescens (strain ATCC BAA-477 / NRRL B-23932 / Pf-5).